A 347-amino-acid chain; its full sequence is MEVKKDNLSSQAKLWNFIYGFAESLVLKCAVQLDLANIIHNSGTSMTLSELSSRLPSQPVNEDALYRVMRYLVHMKLFTKASIDGELRYGLAPPAKYLVKGWDKCMVGSILAITDKDFMAPWHYLKDGLSGESGTAFEKALGTNIWGYMAEHPEKNQLFNEAMANDSRLIMSALVKECGNIFNGITTLVDVGGGTGTAVRNIANAFPHIKCTVYDLPHVIADSPGYSEVHCVAGDMFKFIPKADAIMMKCILHDWDDKECIEILKRCKEAVPVKGGKVIIVDIVLNVQSEHPYTKMRLTLDLDMMLNTGGKERTEEEWKKLIHDAGYKGHKITQITAVQSVIEAYPY.

5 residues coordinate S-adenosyl-L-methionine: Gly-192, Asp-215, Asp-235, Met-236, and Lys-249. His-253 (proton acceptor) is an active-site residue.

This sequence belongs to the class I-like SAM-binding methyltransferase superfamily. Cation-independent O-methyltransferase family. COMT subfamily. As to quaternary structure, homodimer.

It carries out the reaction norcoclaurine + S-adenosyl-L-methionine = coclaurine + S-adenosyl-L-homocysteine + H(+). It participates in alkaloid biosynthesis; (S)-reticuline biosynthesis; (S)-reticuline from (S)-norcoclaurine: step 1/4. Functionally, catalyzes the transfer of the S-methyl group of S-adenosyl-L-methionine (AdoMet) to the 6-hydroxyl group of norcoclaurine to form coclaurine. The protein is (RS)-norcoclaurine 6-O-methyltransferase of Coptis japonica (Japanese goldthread).